Reading from the N-terminus, the 606-residue chain is ATP-dependent rRNA helicase spb4 (606 aa).

Positions 1–29 match the Q motif motif; that stretch reads MSFQSINIDKWLKNAVAAQGFKKMTPVQA. In terms of domain architecture, Helicase ATP-binding spans 32 to 213; sequence IPLFLKNKDL…KIAGLRNSVR (182 aa). Residue 45 to 52 participates in ATP binding; the sequence is AVTGSGKT. Positions 161–164 match the DEAD box motif; it reads DEAD. The region spanning 246–400 is the Helicase C-terminal domain; sequence CMIHLLCTIE…ALDLSRLKVL (155 aa). The disordered stretch occupies residues 521–574; that stretch reads KQKEVKEKRNTRREKRKSKKEFLKAQKNEASNNLKQEIVSKAGAQETENDDLID. The stretch at 521 to 601 forms a coiled coil; sequence KQKEVKEKRN…KSKKRKNQAS (81 aa). The span at 529-539 shows a compositional bias: basic residues; it reads RNTRREKRKSK.

It belongs to the DEAD box helicase family. DDX55/SPB4 subfamily. In terms of assembly, component of pre-60S ribosomal complexes.

Its subcellular location is the nucleus. It is found in the nucleolus. It carries out the reaction ATP + H2O = ADP + phosphate + H(+). Functionally, ATP-binding RNA helicase involved in the biogenesis of 60S ribosomal subunits. Binds 90S pre-ribosomal particles and dissociates from pre-60S ribosomal particles after processing of 27SB pre-rRNA. Required for the normal formation of 18S rRNA through the processing of pre-rRNAs at sites A0, A1 and A2, and the normal formation of 25S and 5.8S rRNAs through the processing of pre-rRNAs at sites C1 and C2. The sequence is that of ATP-dependent rRNA helicase spb4 from Schizosaccharomyces pombe (strain 972 / ATCC 24843) (Fission yeast).